The sequence spans 205 residues: MIGKLKGTIDEIGEDHVVLDVHGVGYVAHCSARTLAKLGRAGEAAVLFIETYVREDQLKLFGFLSALEREWFRLLQSVQGVGSKVALAVLSTLTPGELANAIALQDKTSISRAPGVGPKVAVRIVTELKNKAPAFVGEMAPSIGLKQELGEGVAAAPVSDAVSALTNLGYSRDQAANAVAAALKNGGEGADSARLIRLGLKELSR.

A domain I region spans residues 1–64 (MIGKLKGTID…EDQLKLFGFL (64 aa)). A domain II region spans residues 65 to 143 (SALEREWFRL…AFVGEMAPSI (79 aa)). The interval 144 to 153 (GLKQELGEGV) is flexible linker. Positions 153–205 (VAAAPVSDAVSALTNLGYSRDQAANAVAAALKNGGEGADSARLIRLGLKELSR) are domain III.

It belongs to the RuvA family. In terms of assembly, homotetramer. Forms an RuvA(8)-RuvB(12)-Holliday junction (HJ) complex. HJ DNA is sandwiched between 2 RuvA tetramers; dsDNA enters through RuvA and exits via RuvB. An RuvB hexamer assembles on each DNA strand where it exits the tetramer. Each RuvB hexamer is contacted by two RuvA subunits (via domain III) on 2 adjacent RuvB subunits; this complex drives branch migration. In the full resolvosome a probable DNA-RuvA(4)-RuvB(12)-RuvC(2) complex forms which resolves the HJ.

The protein resides in the cytoplasm. In terms of biological role, the RuvA-RuvB-RuvC complex processes Holliday junction (HJ) DNA during genetic recombination and DNA repair, while the RuvA-RuvB complex plays an important role in the rescue of blocked DNA replication forks via replication fork reversal (RFR). RuvA specifically binds to HJ cruciform DNA, conferring on it an open structure. The RuvB hexamer acts as an ATP-dependent pump, pulling dsDNA into and through the RuvAB complex. HJ branch migration allows RuvC to scan DNA until it finds its consensus sequence, where it cleaves and resolves the cruciform DNA. This chain is Holliday junction branch migration complex subunit RuvA, found in Sinorhizobium medicae (strain WSM419) (Ensifer medicae).